The chain runs to 617 residues: Kelch-like protein 9 (617 aa).

In terms of domain architecture, BTB spans 50–119; it reads CDVTLVPGDG…IYTAKLSLNM (70 aa). Positions 154 to 255 constitute a BACK domain; sequence CVEVGRIANT…TPQDLINYVQ (102 aa). Kelch repeat units follow at residues 299–347, 348–399, 400–446, 448–493, 495–545, and 546–594; these read HLVT…VIGN, FLYV…ALKG, HLYA…VYGG, MYIS…TVGD, LYVI…VFEN, and KIYV…TLTV. Positions 595–617 are disordered; it reads FPPEENPGSPSRESPLSAPSDHS.

Component of the BCR(KLHL9-KLHL13) E3 ubiquitin ligase complex, at least composed of CUL3, KLHL9, KLHL13 and RBX1. Interacts with AURKB.

The protein operates within protein modification; protein ubiquitination. Substrate-specific adapter of a BCR (BTB-CUL3-RBX1) E3 ubiquitin-protein ligase complex required for mitotic progression and cytokinesis. The BCR(KLHL9-KLHL13) E3 ubiquitin ligase complex mediates the ubiquitination of AURKB and controls the dynamic behavior of AURKB on mitotic chromosomes and thereby coordinates faithful mitotic progression and completion of cytokinesis. The polypeptide is Kelch-like protein 9 (Klhl9) (Mus musculus (Mouse)).